The primary structure comprises 260 residues: Phosphonates import ATP-binding protein PhnC 2 (260 aa).

An ABC transporter domain is found at 4–245 (IQINKATKTY…KNTLRTIYQR (242 aa)). Residue 37-44 (GPSGAGKS) participates in ATP binding.

The protein belongs to the ABC transporter superfamily. Phosphonates importer (TC 3.A.1.9.1) family. The complex is composed of two ATP-binding proteins (PhnC), two transmembrane proteins (PhnE) and a solute-binding protein (PhnD).

The protein resides in the cell inner membrane. It catalyses the reaction phosphonate(out) + ATP + H2O = phosphonate(in) + ADP + phosphate + H(+). In terms of biological role, part of the ABC transporter complex PhnCDE involved in phosphonates import. Responsible for energy coupling to the transport system. This chain is Phosphonates import ATP-binding protein PhnC 2, found in Trichodesmium erythraeum (strain IMS101).